Reading from the N-terminus, the 602-residue chain is DNA ligase (602 aa).

Residue E262 coordinates ATP. K264 serves as the catalytic N6-AMP-lysine intermediate. R269, R284, E314, F354, R431, and K437 together coordinate ATP.

It belongs to the ATP-dependent DNA ligase family. In terms of assembly, monomer. The cofactor is Mg(2+). Requires Mn(2+) as cofactor.

It catalyses the reaction ATP + (deoxyribonucleotide)n-3'-hydroxyl + 5'-phospho-(deoxyribonucleotide)m = (deoxyribonucleotide)n+m + AMP + diphosphate.. It carries out the reaction ADP + (deoxyribonucleotide)n-3'-hydroxyl + 5'-phospho-(deoxyribonucleotide)m = (deoxyribonucleotide)n+m + AMP + phosphate.. The catalysed reaction is GTP + (deoxyribonucleotide)n-3'-hydroxyl + 5'-phospho-(deoxyribonucleotide)m = (deoxyribonucleotide)n+m + GMP + diphosphate.. Inhibited in the presence of 100 mM KCl, NaCl or NH(4)Cl. In terms of biological role, DNA ligase that seals nicks in double-stranded DNA during DNA replication, DNA recombination and DNA repair. Can also use ADP, but not NAD(+). In Aeropyrum pernix (strain ATCC 700893 / DSM 11879 / JCM 9820 / NBRC 100138 / K1), this protein is DNA ligase.